The sequence spans 540 residues: Chaperonin GroEL (540 aa).

ATP is bound by residues 29 to 32, 86 to 90, G413, 478 to 480, and D494; these read TLGP, DGTTT, and DAL.

This sequence belongs to the chaperonin (HSP60) family. As to quaternary structure, forms a cylinder of 14 subunits composed of two heptameric rings stacked back-to-back. Interacts with the co-chaperonin GroES.

It is found in the cytoplasm. It carries out the reaction ATP + H2O + a folded polypeptide = ADP + phosphate + an unfolded polypeptide.. In terms of biological role, together with its co-chaperonin GroES, plays an essential role in assisting protein folding. The GroEL-GroES system forms a nano-cage that allows encapsulation of the non-native substrate proteins and provides a physical environment optimized to promote and accelerate protein folding. The sequence is that of Chaperonin GroEL from Clostridioides difficile (Peptoclostridium difficile).